The following is a 172-amino-acid chain: Adenine phosphoribosyltransferase (172 aa).

This sequence belongs to the purine/pyrimidine phosphoribosyltransferase family. As to quaternary structure, homodimer.

The protein resides in the cytoplasm. It catalyses the reaction AMP + diphosphate = 5-phospho-alpha-D-ribose 1-diphosphate + adenine. Its pathway is purine metabolism; AMP biosynthesis via salvage pathway; AMP from adenine: step 1/1. In terms of biological role, catalyzes a salvage reaction resulting in the formation of AMP, that is energically less costly than de novo synthesis. In Streptococcus thermophilus (strain ATCC BAA-250 / LMG 18311), this protein is Adenine phosphoribosyltransferase.